The sequence spans 77 residues: Putative defensin-like protein 118 (77 aa).

Residues 1–25 (MSKSTILAIFMIVLVLGKVTKETQG) form the signal peptide. Intrachain disulfides connect cysteine 29-cysteine 75, cysteine 39-cysteine 58, cysteine 44-cysteine 69, and cysteine 48-cysteine 71.

It belongs to the DEFL family.

It localises to the secreted. The protein is Putative defensin-like protein 118 (LCR52) of Arabidopsis thaliana (Mouse-ear cress).